A 190-amino-acid chain; its full sequence is Putative manganese efflux pump MntP (190 aa).

Transmembrane regions (helical) follow at residues 5 to 25 (ALLALAVALAMDALAVAVATG), 41 to 61 (WHFGLFQAAMPIAGWFMGQGI), 64 to 84 (FVDAWAHWIAFGLLAFIGLKM), 105 to 125 (TSLIMLSVATSIDALAVGVTL), 127 to 147 (MLGLSIWMPAAVIGLVCLGLT), and 169 to 189 (ILGGAVLLGIGFKILHESGVF).

It belongs to the MntP (TC 9.B.29) family.

Its subcellular location is the cell inner membrane. Its function is as follows. Probably functions as a manganese efflux pump. The sequence is that of Putative manganese efflux pump MntP from Oleidesulfovibrio alaskensis (strain ATCC BAA-1058 / DSM 17464 / G20) (Desulfovibrio alaskensis).